A 157-amino-acid chain; its full sequence is 2-C-methyl-D-erythritol 2,4-cyclodiphosphate synthase (157 aa).

Aspartate 8 and histidine 10 together coordinate a divalent metal cation. 4-CDP-2-C-methyl-D-erythritol 2-phosphate contacts are provided by residues 8 to 10 (DVH) and 34 to 35 (HS). Histidine 42 serves as a coordination point for a divalent metal cation. 4-CDP-2-C-methyl-D-erythritol 2-phosphate-binding positions include 56-58 (DIG), 61-65 (FPDTD), 100-106 (AQAPKMA), 132-135 (TTTE), phenylalanine 139, and arginine 142.

Belongs to the IspF family. In terms of assembly, homotrimer. It depends on a divalent metal cation as a cofactor.

The enzyme catalyses 4-CDP-2-C-methyl-D-erythritol 2-phosphate = 2-C-methyl-D-erythritol 2,4-cyclic diphosphate + CMP. Its pathway is isoprenoid biosynthesis; isopentenyl diphosphate biosynthesis via DXP pathway; isopentenyl diphosphate from 1-deoxy-D-xylulose 5-phosphate: step 4/6. Involved in the biosynthesis of isopentenyl diphosphate (IPP) and dimethylallyl diphosphate (DMAPP), two major building blocks of isoprenoid compounds. Catalyzes the conversion of 4-diphosphocytidyl-2-C-methyl-D-erythritol 2-phosphate (CDP-ME2P) to 2-C-methyl-D-erythritol 2,4-cyclodiphosphate (ME-CPP) with a corresponding release of cytidine 5-monophosphate (CMP). This chain is 2-C-methyl-D-erythritol 2,4-cyclodiphosphate synthase, found in Edwardsiella ictaluri (strain 93-146).